The primary structure comprises 265 residues: Aquaporin-5 (265 aa).

The Cytoplasmic portion of the chain corresponds to 1–12; it reads MKKEVCSLAFFK. A helical transmembrane segment spans residues 13 to 33; sequence AVFAEFLATLIFVFFGLGSAL. The Extracellular segment spans residues 34-39; the sequence is KWPSAL. Residues 40 to 60 traverse the membrane as a helical segment; sequence PTILQISIAFGLAIGTLAQAL. Over 61–65 the chain is Cytoplasmic; the sequence is GPVSG. The discontinuously helical intramembrane region spans 66–74; sequence GHINPAITL. Positions 69–71 match the NPA 1 motif; it reads NPA. At 75-87 the chain is on the cytoplasmic side; the sequence is ALLIGNQISLLRA. Residues 88 to 108 form a helical membrane-spanning segment; sequence VFYVAAQLVGAIAGAGILYWL. Topologically, residues 109-126 are extracellular; it reads APLNARGNLAVNALNNNT. An N-linked (GlcNAc...) asparagine glycan is attached at asparagine 124. The helical transmembrane segment at 127–147 threads the bilayer; sequence TPGKAMVVELILTFQLALCIF. Over 148-158 the chain is Cytoplasmic; it reads SSTDSRRTSPV. Residues 159 to 179 form a helical membrane-spanning segment; sequence GSPALSIGLSVTLGHLVGIYF. Threonine 180 is a topological domain (extracellular). Positions 181 to 191 form an intramembrane region, discontinuously helical; the sequence is GCSMNPARSFG. The short motif at 185 to 187 is the NPA 2 element; that stretch reads NPA. At 192-203 the chain is on the extracellular side; sequence PAVVMNRFSPSH. A helical membrane pass occupies residues 204–224; the sequence is WVFWVGPIVGAMLAAILYFYL. At 225–265 the chain is on the cytoplasmic side; it reads LFPSSLSLHDRVAVVKGTYEPEEDWEDHREERKKTIELTAH.

This sequence belongs to the MIP/aquaporin (TC 1.A.8) family. In terms of assembly, homotetramer; each monomer provides an independent water pore. Interacts with TRPV4; the interaction is probably indirect and regulates TRPV4 activation by hypotonicity. In terms of tissue distribution, salivary glands, lacrimal glands, corneal epithelium in eye, trachea and lung.

It localises to the apical cell membrane. The protein localises to the cell membrane. The protein resides in the cytoplasmic vesicle membrane. The enzyme catalyses H2O(in) = H2O(out). In terms of biological role, aquaporins form homotetrameric transmembrane channels, with each monomer independently mediating water transport across the plasma membrane along its osmotic gradient. Plays an important role in fluid secretion in salivary glands. Required for TRPV4 activation by hypotonicity. Together with TRPV4, controls regulatory volume decrease in salivary epithelial cells. Seems to play a redundant role in water transport in the eye, lung and in sweat glands. The protein is Aquaporin-5 of Rattus norvegicus (Rat).